The chain runs to 453 residues: Ribulose bisphosphate carboxylase large chain (453 aa).

Positions 1 to 2 (MS) are excised as a propeptide. The residue at position 3 (P3) is an N-acetylproline. The residue at position 14 (K14) is an N6,N6,N6-trimethyllysine. Substrate is bound by residues N123 and T173. K175 (proton acceptor) is an active-site residue. K177 is a substrate binding site. Mg(2+) contacts are provided by K201, D203, and E204. Residue K201 is modified to N6-carboxylysine. Residue H294 is the Proton acceptor of the active site. Substrate-binding residues include R295, H327, and S379.

Belongs to the RuBisCO large chain family. Type I subfamily. As to quaternary structure, heterohexadecamer of 8 large chains and 8 small chains; disulfide-linked. The disulfide link is formed within the large subunit homodimers. Mg(2+) serves as cofactor. In terms of processing, the disulfide bond which can form in the large chain dimeric partners within the hexadecamer appears to be associated with oxidative stress and protein turnover.

It is found in the plastid. It localises to the chloroplast. It catalyses the reaction 2 (2R)-3-phosphoglycerate + 2 H(+) = D-ribulose 1,5-bisphosphate + CO2 + H2O. The enzyme catalyses D-ribulose 1,5-bisphosphate + O2 = 2-phosphoglycolate + (2R)-3-phosphoglycerate + 2 H(+). RuBisCO catalyzes two reactions: the carboxylation of D-ribulose 1,5-bisphosphate, the primary event in carbon dioxide fixation, as well as the oxidative fragmentation of the pentose substrate in the photorespiration process. Both reactions occur simultaneously and in competition at the same active site. The sequence is that of Ribulose bisphosphate carboxylase large chain from Rubia tinctorum (Madder).